A 156-amino-acid polypeptide reads, in one-letter code: Endoribonuclease YbeY (156 aa).

Residues H117, H121, and H127 each contribute to the Zn(2+) site.

It belongs to the endoribonuclease YbeY family. Requires Zn(2+) as cofactor.

The protein resides in the cytoplasm. Functionally, single strand-specific metallo-endoribonuclease involved in late-stage 70S ribosome quality control and in maturation of the 3' terminus of the 16S rRNA. This Shewanella halifaxensis (strain HAW-EB4) protein is Endoribonuclease YbeY.